A 217-amino-acid chain; its full sequence is Large ribosomal subunit protein uL3 (217 aa).

The protein belongs to the universal ribosomal protein uL3 family. As to quaternary structure, part of the 50S ribosomal subunit. Forms a cluster with proteins L14 and L19.

Functionally, one of the primary rRNA binding proteins, it binds directly near the 3'-end of the 23S rRNA, where it nucleates assembly of the 50S subunit. In Mycolicibacterium paratuberculosis (strain ATCC BAA-968 / K-10) (Mycobacterium paratuberculosis), this protein is Large ribosomal subunit protein uL3.